The primary structure comprises 238 residues: C-reactive protein (238 aa).

The signal sequence occupies residues Met-1–Ala-16. Gln-17 is modified (pyrrolidone carboxylic acid). In terms of domain architecture, Pentraxin (PTX) spans Val-21–Cys-223. A disulfide bond links Cys-52 and Cys-113. 6 residues coordinate Ca(2+): Asp-76, Asn-77, Glu-154, Gln-155, Asp-156, and Gln-166.

It belongs to the pentraxin family. Homodimer; disulfide-linked. It is not known if it assembles into a pentraxin (or pentaxin) structure. Pentaxins have a discoid arrangement of 5 non-covalently bound subunits. Ca(2+) is required as a cofactor. Post-translationally, cys-89 or Cys-223 or Cys-236 could be involved in interchain disulfide linkage.

The protein resides in the secreted. In terms of biological role, displays several functions associated with host defense: it promotes agglutination, bacterial capsular swelling, phagocytosis, and complement fixation through its calcium-dependent binding to phosphorylcholine. The chain is C-reactive protein (crp) from Xenopus laevis (African clawed frog).